The chain runs to 308 residues: tRNA dimethylallyltransferase (308 aa).

G10–T17 is an ATP binding site. T12–T17 serves as a coordination point for substrate. 2 interaction with substrate tRNA regions span residues D35–L38 and Q159–R163.

Belongs to the IPP transferase family. Monomer. Mg(2+) is required as a cofactor.

The enzyme catalyses adenosine(37) in tRNA + dimethylallyl diphosphate = N(6)-dimethylallyladenosine(37) in tRNA + diphosphate. Functionally, catalyzes the transfer of a dimethylallyl group onto the adenine at position 37 in tRNAs that read codons beginning with uridine, leading to the formation of N6-(dimethylallyl)adenosine (i(6)A). The protein is tRNA dimethylallyltransferase of Francisella philomiragia subsp. philomiragia (strain ATCC 25017 / CCUG 19701 / FSC 153 / O#319-036).